The following is a 315-amino-acid chain: Diacylglycerol kinase (315 aa).

One can recognise a DAGKc domain in the interval 1 to 132; that stretch reads MRKRARIIYN…VDIGKMNNRY (132 aa). ATP is bound by residues 10–14, Thr-41, 67–73, and Thr-94; these read NPTSG and GDGTLNE. The Mg(2+) site is built by Lys-213, Asp-216, and Tyr-218. Glu-273 acts as the Proton acceptor in catalysis.

Belongs to the diacylglycerol/lipid kinase family. In terms of assembly, homodimer. Requires Mg(2+) as cofactor.

The enzyme catalyses a 1,2-diacyl-sn-glycerol + ATP = a 1,2-diacyl-sn-glycero-3-phosphate + ADP + H(+). Functionally, catalyzes the phosphorylation of diacylglycerol (DAG) into phosphatidic acid. Is a key enzyme involved in the production of lipoteichoic acid by reintroducing DAG formed from the breakdown of membrane phospholipids into the phosphatidylglycerol biosynthetic pathway. The chain is Diacylglycerol kinase (dagK) from Staphylococcus aureus (strain USA300 / TCH1516).